The sequence spans 489 residues: Protein LMBR1L (489 aa).

Residues 1–21 (MEAPDCEVLSVREQLFHERIR) are Extracellular-facing. Residues 1–59 (MEAPDCEVLSVREQLFHERIRECIISTLLFATLYILCHIFLTRFKKPAEFTTVDDADAT) are interaction with LGB. Positions 1 to 76 (MEAPDCEVLS…LCTFTLAIAL (76 aa)) are LCN1-binding. A helical transmembrane segment spans residues 22-42 (ECIISTLLFATLYILCHIFLT). Over 43-66 (RFKKPAEFTTVDDADATVNKIALE) the chain is Cytoplasmic. The chain crosses the membrane as a helical span at residues 67-87 (LCTFTLAIALGAVLLLPFSII). The Extracellular portion of the chain corresponds to 88–114 (SNEVLLSLPRNYYIQWLNGSLIHGLWN). The helical transmembrane segment at 115–135 (LVFLFSNLSLIFLMPFAYFFT) threads the bilayer. Over 136–154 (ESEGFAGSRKGVLGRVYET) the chain is Cytoplasmic. The chain crosses the membrane as a helical span at residues 155–175 (VVMLMLLTLLVLGMVWVASAI). Over 176–196 (VDNNKASRESLYDFWEYYLPY) the chain is Extracellular. The chain crosses the membrane as a helical span at residues 197–217 (LYSCISFLGVLLLLVCTPLGL). The Cytoplasmic segment spans residues 218–305 (ARMFSVTGKL…NLGYPLAMLC (88 aa)). The chain crosses the membrane as a helical span at residues 306–326 (LLVLTGLSVLIVAIHILELLI). At 327-350 (DEAAMPRGMQGASLGQVSFSKLGS) the chain is on the extracellular side. The helical transmembrane segment at 351–371 (FGAVVQVVLIFYLMVSSVVGF) threads the bilayer. Topologically, residues 372-388 (YSSPLFRSLRPRWHDTA) are cytoplasmic. The chain crosses the membrane as a helical span at residues 389 to 409 (MTQIIGNCVCLLVLSSALPVF). The Extracellular segment spans residues 410–431 (SRTLGLTRFDLLGDFGRFNWLG). Residues 432-452 (NFYIVFLYNAAFAGLTTLCLV) form a helical membrane-spanning segment. Over 453–489 (KTFTAAVRAELIRAFGLDRLPLPVSGFPRASRKTQHQ) the chain is Cytoplasmic.

This sequence belongs to the LIMR family. As to quaternary structure, dimer. Can also form higher oligomers. Interacts with LCN1; this interaction mediates the endocytosis of LCN1. Interacts with UBAC2, FAF2, VCP, AMFR, ZNRF3, CTNNB1, LRP6, GSK3A, GSK3B, FZD6, DVL2 and RNF43. Interaction with LGB and SCGB1A1 is controversial.

The protein localises to the cell membrane. The protein resides in the endoplasmic reticulum membrane. Its function is as follows. Plays an essential role in lymphocyte development by negatively regulating the canonical Wnt signaling pathway. In association with UBAC2 and E3 ubiquitin-protein ligase AMFR, promotes the ubiquitin-mediated degradation of CTNNB1 and Wnt receptors FZD6 and LRP6. LMBR1L stabilizes the beta-catenin destruction complex that is required for regulating CTNNB1 levels. Acts as a LCN1 receptor and can mediate its endocytosis. In Macaca fascicularis (Crab-eating macaque), this protein is Protein LMBR1L (LMBR1L).